We begin with the raw amino-acid sequence, 331 residues long: Phenylalanine--tRNA ligase alpha subunit (331 aa).

Glu252 serves as a coordination point for Mg(2+).

It belongs to the class-II aminoacyl-tRNA synthetase family. Phe-tRNA synthetase alpha subunit type 1 subfamily. Tetramer of two alpha and two beta subunits. The cofactor is Mg(2+).

The protein resides in the cytoplasm. The enzyme catalyses tRNA(Phe) + L-phenylalanine + ATP = L-phenylalanyl-tRNA(Phe) + AMP + diphosphate + H(+). This is Phenylalanine--tRNA ligase alpha subunit from Hahella chejuensis (strain KCTC 2396).